Reading from the N-terminus, the 171-residue chain is MKVTVFHANECDRKKCTSIKMEKLGKCKLVYNINKIPSGAVVLNPFAQKAVSYEDYRYVHRRGVVGLDCSWNEVSSSKKFFSLSKYHRSLPFLIATNPVNYGKPCILSTVEAVSATLYITRFKDEAKDILDGFKWGHTFLELNHDLLEAYSEADTSKDVVRVQNEFLESKE.

S-adenosyl-L-methionine is bound by residues Thr17, Leu67, Leu90, and Thr109.

The protein belongs to the TDD superfamily. TSR3 family.

The protein resides in the cytoplasm. It carries out the reaction an N(1)-methylpseudouridine in rRNA + S-adenosyl-L-methionine = N(1)-methyl-N(3)-[(3S)-3-amino-3-carboxypropyl]pseudouridine in rRNA + S-methyl-5'-thioadenosine + H(+). In terms of biological role, aminocarboxypropyltransferase that catalyzes the aminocarboxypropyl transfer on pseudouridine corresponding to position 914 in M.jannaschii 16S rRNA. It constitutes the last step in biosynthesis of the hypermodified N1-methyl-N3-(3-amino-3-carboxypropyl) pseudouridine (m1acp3-Psi). This chain is 16S rRNA aminocarboxypropyltransferase, found in Methanobrevibacter smithii (strain ATCC 35061 / DSM 861 / OCM 144 / PS).